Reading from the N-terminus, the 104-residue chain is N(4)-acetylcytidine amidohydrolase (104 aa).

The 96-residue stretch at 6 to 101 (TFFERFEHDI…EQLYMIRFKV (96 aa)) folds into the ASCH domain. Residue K20 is the Proton acceptor of the active site. T23 (nucleophile) is an active-site residue. E73 serves as the catalytic Proton donor.

Belongs to the N(4)-acetylcytidine amidohydrolase family.

It carries out the reaction N(4)-acetylcytidine + H2O = cytidine + acetate + H(+). The catalysed reaction is N(4)-acetyl-2'-deoxycytidine + H2O = 2'-deoxycytidine + acetate + H(+). The enzyme catalyses N(4)-acetylcytosine + H2O = cytosine + acetate + H(+). Catalyzes the hydrolysis of N(4)-acetylcytidine (ac4C). The sequence is that of N(4)-acetylcytidine amidohydrolase from Shewanella oneidensis (strain ATCC 700550 / JCM 31522 / CIP 106686 / LMG 19005 / NCIMB 14063 / MR-1).